The primary structure comprises 956 residues: MEEKKVDLKDTLNLPRTEFPMKANLPQREPQILEKWKGLYEKIQKERKGREVFVLHDGPPYANGHIHVGHALNKILKDVINKYNLLIGKNVNFIPGWDCHGLPIERAVEKELSKKKIKKESLPKTEFRELCREYAKKYVNIQREDFVRLGVLGDWEHPYLTMDPKYEAQEIRELGKFFERGLAYRSKKPVYWCIYDKTAEAEAEVEYYEKEDPSIYVKFPLKSGEKFGIKDKKVFAIIWTTTPWTLPANLGIMVKEDADYVLVEVEDEVWIVAKELMDKFFETVNRPEGLVLETVKGKDLVGLEYTHPFVEKEKLKGHLSEETLKNMWKIYPSEFVSLDTGTGLVHMAPGHGQEDYVVGQRYGLEPYAPVSDEGRFVEPAPEFLINVRVFDANHLIVGVLKEKGFLVHEEKIRHSYPHCWRCKNPVIFRATPQWFIGMDIEFFGKTLRQRALEEIEKVKWIPEYGKNRIKSMVENRPDWCISRQRFWGVPITVFYCENCGEIIKDREVFERVAQLVENSEKGSDVWFELTSSQLLPEGYKCPKCGGDSFTKEEDILDVWFDSGCSHAAVIRPLGFQKADLYLEGSDQHRGWFQASLLESVGSYLEAPYKAVLTHGFIVDEKGRKMSKSLGNVISPQEVVKEFGADILRLWVVSEDYTEDVKLGKNLLKKIADDYRKIRNTLRFIIGNLYDFNPRTNALPFEKLHHFDRWIISELQNLLKKVHENYEKFLFYRVHNHIKNFVITTLSAIYLDVLKDRLYVYAPASWERRSAQTALWHLLIALTTSTAPYLSFTAEELWEHVGKLDPSLPESVFLYEMPKPDENLKDEEVLKDYEILLKVRDEVMRALEVARKEKGIIKHPYEAKVYIRGDESVESLLKKYEDYLNFFFTVSQVELREGGEVQIEGEELPVKVGVNKAEGEKCPRCWIYYQKEEFVGCVCKRCAKALSEMGIELNAVC.

The 'HIGH' region motif lies at 60 to 70 (PYANGHIHVGH). E583 is an L-isoleucyl-5'-AMP binding site. The short motif at 624-628 (KMSKS) is the 'KMSKS' region element. K627 contributes to the ATP binding site. Residues C921, C924, C938, and C941 each coordinate Zn(2+).

Belongs to the class-I aminoacyl-tRNA synthetase family. IleS type 1 subfamily. In terms of assembly, monomer. Requires Zn(2+) as cofactor.

It is found in the cytoplasm. It catalyses the reaction tRNA(Ile) + L-isoleucine + ATP = L-isoleucyl-tRNA(Ile) + AMP + diphosphate. Functionally, catalyzes the attachment of isoleucine to tRNA(Ile). As IleRS can inadvertently accommodate and process structurally similar amino acids such as valine, to avoid such errors it has two additional distinct tRNA(Ile)-dependent editing activities. One activity is designated as 'pretransfer' editing and involves the hydrolysis of activated Val-AMP. The other activity is designated 'posttransfer' editing and involves deacylation of mischarged Val-tRNA(Ile). This is Isoleucine--tRNA ligase from Aquifex aeolicus (strain VF5).